Consider the following 194-residue polypeptide: Putative 3-methyladenine DNA glycosylase (194 aa).

It belongs to the DNA glycosylase MPG family.

The polypeptide is Putative 3-methyladenine DNA glycosylase (Anaeromyxobacter sp. (strain Fw109-5)).